The primary structure comprises 180 residues: Riboflavin kinase (180 aa).

Residues threonine 40 and asparagine 42 each coordinate Mg(2+). Glutamate 117 serves as the catalytic Nucleophile.

Belongs to the flavokinase family. Requires Zn(2+) as cofactor. Mg(2+) is required as a cofactor.

The enzyme catalyses riboflavin + ATP = FMN + ADP + H(+). It functions in the pathway cofactor biosynthesis; FMN biosynthesis; FMN from riboflavin (ATP route): step 1/1. In terms of biological role, catalyzes the phosphorylation of riboflavin (vitamin B2) to form flavin mononucleotide (FMN) coenzyme. The sequence is that of Riboflavin kinase (FMN1) from Meyerozyma guilliermondii (strain ATCC 6260 / CBS 566 / DSM 6381 / JCM 1539 / NBRC 10279 / NRRL Y-324) (Yeast).